A 263-amino-acid chain; its full sequence is Protein TILLER ANGLE CONTROL 1 (263 aa).

Positions 55–61 (GILAIGT) match the IGT motif motif. The tract at residues 243–263 (GKKIHPEQLNGRSNAEGPLTA) is disordered.

It belongs to the TAC family. As to expression, highly expressed in leaf sheath pulvinus. Expressed in shoot apical meristem and leaves.

Its function is as follows. Involved in the regulation of leaf growth angle. Promotes horizontal shoot growth. The chain is Protein TILLER ANGLE CONTROL 1 from Zea mays (Maize).